A 278-amino-acid chain; its full sequence is Keratin-associated protein 5-1 (278 aa).

8 tandem repeats follow at residues 42-45 (CCVP), 48-51 (CCKP), 130-133 (CCVP), 136-139 (CCKP), 142-145 (CCVP), 239-242 (CCKP), 258-261 (CCKP), and 268-271 (CCVP). The segment at 42–271 (CCVPVCCCKP…CCSQSSCCVP (230 aa)) is 8 X 4 AA repeats of C-C-X-P.

It belongs to the KRTAP type 5 family. As to quaternary structure, interacts with hair keratins. Expressed in hair root but not in skin. Expressed also in lung, pancreas, ovary, testis.

In the hair cortex, hair keratin intermediate filaments are embedded in an interfilamentous matrix, consisting of hair keratin-associated protein (KRTAP), which are essential for the formation of a rigid and resistant hair shaft through their extensive disulfide bond cross-linking with abundant cysteine residues of hair keratins. The matrix proteins include the high-sulfur and high-glycine-tyrosine keratins. The polypeptide is Keratin-associated protein 5-1 (KRTAP5-1) (Homo sapiens (Human)).